A 61-amino-acid chain; its full sequence is uncharacterized protein (61 aa).

The helical transmembrane segment at 10-27 threads the bilayer; sequence RILFFFFIFFTLFLFNIP.

The protein localises to the membrane. This is an uncharacterized protein from Dictyostelium discoideum (Social amoeba).